We begin with the raw amino-acid sequence, 262 residues long: Pyridoxine 5'-phosphate synthase (262 aa).

N6 is a binding site for 3-amino-2-oxopropyl phosphate. 8 to 9 serves as a coordination point for 1-deoxy-D-xylulose 5-phosphate; sequence DH. R17 is a binding site for 3-amino-2-oxopropyl phosphate. H42 functions as the Proton acceptor in the catalytic mechanism. 2 residues coordinate 1-deoxy-D-xylulose 5-phosphate: R44 and H49. E69 serves as the catalytic Proton acceptor. T99 lines the 1-deoxy-D-xylulose 5-phosphate pocket. H213 acts as the Proton donor in catalysis. 3-amino-2-oxopropyl phosphate contacts are provided by residues G214 and 235 to 236; that span reads GH.

Belongs to the PNP synthase family. As to quaternary structure, homooctamer; tetramer of dimers.

The protein localises to the cytoplasm. It catalyses the reaction 3-amino-2-oxopropyl phosphate + 1-deoxy-D-xylulose 5-phosphate = pyridoxine 5'-phosphate + phosphate + 2 H2O + H(+). Its pathway is cofactor biosynthesis; pyridoxine 5'-phosphate biosynthesis; pyridoxine 5'-phosphate from D-erythrose 4-phosphate: step 5/5. Catalyzes the complicated ring closure reaction between the two acyclic compounds 1-deoxy-D-xylulose-5-phosphate (DXP) and 3-amino-2-oxopropyl phosphate (1-amino-acetone-3-phosphate or AAP) to form pyridoxine 5'-phosphate (PNP) and inorganic phosphate. In Wolinella succinogenes (strain ATCC 29543 / DSM 1740 / CCUG 13145 / JCM 31913 / LMG 7466 / NCTC 11488 / FDC 602W) (Vibrio succinogenes), this protein is Pyridoxine 5'-phosphate synthase.